Reading from the N-terminus, the 56-residue chain is Small ribosomal subunit protein eS31 (56 aa).

The Zn(2+) site is built by C28, C31, C46, and C49. The C4-type zinc-finger motif lies at 28–49; the sequence is CPRCGPGVFMANHKDRWSCGRC.

This sequence belongs to the eukaryotic ribosomal protein eS31 family. As to quaternary structure, part of the 30S ribosomal subunit. Zn(2+) is required as a cofactor.

In Thermococcus gammatolerans (strain DSM 15229 / JCM 11827 / EJ3), this protein is Small ribosomal subunit protein eS31.